A 150-amino-acid polypeptide reads, in one-letter code: Protein E6 (150 aa).

Zinc fingers lie at residues 31–67 (CVFC…CAIC) and 104–140 (CYLC…CFHC).

The protein belongs to the papillomaviridae E6 protein family. In terms of assembly, forms homodimers. Interacts with ubiquitin-protein ligase UBE3A/E6-AP; this interaction stimulates UBE3A ubiquitin activity. Interacts with host TP53 and EP300; this interaction inhibits TP53 activity.

The protein resides in the host cytoplasm. It localises to the host nucleus. Its function is as follows. This protein may be involved in the oncogenic potential of this virus (cervical neoplasia-associated virus). In terms of biological role, plays a major role in the induction and maintenance of cellular transformation. E6 associates with host UBE3A/E6-AP ubiquitin-protein ligase and modulates its activity. Sequesters tumor suppressor TP53 in the host cytoplasm and modulates its activity by interacting with host EP300 that results in the reduction of TP53 acetylation and activation. In turn, apoptosis induced by DNA damage is inhibited. E6 also protects host keratinocytes from apoptosis by mediating the degradation of host BAK1. May also inhibit host immune response. This is Protein E6 from Human papillomavirus 44.